Consider the following 274-residue polypeptide: tRNA-cytidine(32) 2-sulfurtransferase (274 aa).

Residues 40-45 carry the PP-loop motif motif; it reads SGGKDS. Residues Cys-115, Cys-118, and Cys-206 each contribute to the [4Fe-4S] cluster site.

It belongs to the TtcA family. Homodimer. Requires Mg(2+) as cofactor. It depends on [4Fe-4S] cluster as a cofactor.

The protein localises to the cytoplasm. It catalyses the reaction cytidine(32) in tRNA + S-sulfanyl-L-cysteinyl-[cysteine desulfurase] + AH2 + ATP = 2-thiocytidine(32) in tRNA + L-cysteinyl-[cysteine desulfurase] + A + AMP + diphosphate + H(+). It participates in tRNA modification. Functionally, catalyzes the ATP-dependent 2-thiolation of cytidine in position 32 of tRNA, to form 2-thiocytidine (s(2)C32). The sulfur atoms are provided by the cysteine/cysteine desulfurase (IscS) system. This chain is tRNA-cytidine(32) 2-sulfurtransferase, found in Pseudomonas aeruginosa (strain LESB58).